Here is a 504-residue protein sequence, read N- to C-terminus: WD repeat-containing protein 55 homolog (504 aa).

Disordered regions lie at residues M1–D21 and Q33–D132. Composition is skewed to acidic residues over residues N12 to D21 and Q33 to L48. Residues S63 to S74 show a composition bias toward low complexity. Residues N78–I89 show a composition bias toward acidic residues. WD repeat units lie at residues K156–L195, V200–L239, A243–E281, E284–Q323, P326–D365, and Q410–D449. Positions F477–T504 are disordered.

This sequence belongs to the WD repeat WDR55 family.

This Drosophila virilis (Fruit fly) protein is WD repeat-containing protein 55 homolog.